The chain runs to 305 residues: GMP synthase [glutamine-hydrolyzing] subunit B (305 aa).

The region spanning Val2–Arg185 is the GMPS ATP-PPase domain. Ser29–Ser35 provides a ligand contact to ATP.

In terms of assembly, heterodimer composed of a glutamine amidotransferase subunit (A) and a GMP-binding subunit (B).

It carries out the reaction XMP + L-glutamine + ATP + H2O = GMP + L-glutamate + AMP + diphosphate + 2 H(+). The protein operates within purine metabolism; GMP biosynthesis; GMP from XMP (L-Gln route): step 1/1. Its function is as follows. Catalyzes the synthesis of GMP from XMP. This Halorubrum lacusprofundi (strain ATCC 49239 / DSM 5036 / JCM 8891 / ACAM 34) protein is GMP synthase [glutamine-hydrolyzing] subunit B.